A 308-amino-acid chain; its full sequence is MTRSTAHVTVLLEEAVGALAIKADGVYVDATFGRGGHSRRILSELNQNGRLVAVDRDPQAIAAGAEIDDSRFLLVHRAFGELAEAADEAGIRDVDGVLFDVGVSSPQIDDGERGFSFRYDAPLDMRMDTTQGETAAEWLARAEIRDITEVIRNYGEERFAFQIAKKVVAARLEQPIVTTGQFAALVRETVRTREPGQDPATRSFQALRIHINQELRQLEVALPQALELLKPGGRLVVISFHSLEDRIVKNFMRDQSIADAMPKSLPLRADQLPKPKLRLVGRPIKPSAAEIDANPRARSAVMRIAEKL.

S-adenosyl-L-methionine-binding positions include 35 to 37 (GGH), Asp55, Phe79, Asp100, and Gln107.

The protein belongs to the methyltransferase superfamily. RsmH family.

Its subcellular location is the cytoplasm. It carries out the reaction cytidine(1402) in 16S rRNA + S-adenosyl-L-methionine = N(4)-methylcytidine(1402) in 16S rRNA + S-adenosyl-L-homocysteine + H(+). Its function is as follows. Specifically methylates the N4 position of cytidine in position 1402 (C1402) of 16S rRNA. The protein is Ribosomal RNA small subunit methyltransferase H of Dechloromonas aromatica (strain RCB).